The following is a 297-amino-acid chain: Nicotinate-nucleotide pyrophosphorylase [carboxylating] (297 aa).

Positions 8–12 (LLLPP) are important for hexamer formation. Residues R102, 138-139 (RK), 160-161 (HR), K171, E201, D222, 248-250 (SGG), and G270 contribute to the quinolinate site.

Belongs to the NadC/ModD family. In terms of assembly, hexamer formed by 3 homodimers.

It carries out the reaction nicotinate beta-D-ribonucleotide + CO2 + diphosphate = quinolinate + 5-phospho-alpha-D-ribose 1-diphosphate + 2 H(+). It participates in cofactor biosynthesis; NAD(+) biosynthesis; nicotinate D-ribonucleotide from quinolinate: step 1/1. With respect to regulation, activity toward QA is slightly repressed by phosphoribosylpyrophosphate (PRPP) in both a competitive and a non-competitive manner. Competitively inhibited by phthalic acid (PHT). Its function is as follows. Involved in the catabolism of quinolinic acid (QA). The sequence is that of Nicotinate-nucleotide pyrophosphorylase [carboxylating] (QPRT) from Homo sapiens (Human).